Consider the following 132-residue polypeptide: uncharacterized protein (132 aa).

The next 4 membrane-spanning stretches (helical) occupy residues 15–37 (FPEY…LLLY), 49–71 (AFIP…LRLF), 81–103 (VILT…LALV), and 110–129 (LAAT…MAFV).

Its subcellular location is the cell membrane. This is an uncharacterized protein from Archaeoglobus fulgidus (strain ATCC 49558 / DSM 4304 / JCM 9628 / NBRC 100126 / VC-16).